Consider the following 247-residue polypeptide: Putative ankyrin repeat protein RBE_1110 (247 aa).

ANK repeat units lie at residues 105 to 135 and 139 to 171; these read QNKD…CIDY and EGHN…KLIT.

The sequence is that of Putative ankyrin repeat protein RBE_1110 from Rickettsia bellii (strain RML369-C).